A 198-amino-acid polypeptide reads, in one-letter code: MAEVRARVDFKVGAKSNIDAEILSFHGLQSDKEHVAVIFKSADTTQEAPLVRMHSECLTGDVFHSSRCDCGEQLEETITRMGQSGGIILYLRQEGRGIGLYNKIDAYRLQSQGMNTYEANNHLGFGDDLRDFTEAAQMLQALGVKKIRLVTNNPKKIRELQEHGIEIVEVVHTSAHIKDGNENYLKAKVSHGKHQLKL.

A GTP-binding site is contributed by 52–56 (RMHSE). C57, C68, and C70 together coordinate Zn(2+). Residues Q73, 94-96 (EGR), and T116 contribute to the GTP site. D128 serves as the catalytic Proton acceptor. R130 serves as the catalytic Nucleophile. 2 residues coordinate GTP: T151 and K156.

Belongs to the GTP cyclohydrolase II family. Zn(2+) is required as a cofactor.

The enzyme catalyses GTP + 4 H2O = 2,5-diamino-6-hydroxy-4-(5-phosphoribosylamino)-pyrimidine + formate + 2 phosphate + 3 H(+). Its pathway is cofactor biosynthesis; riboflavin biosynthesis; 5-amino-6-(D-ribitylamino)uracil from GTP: step 1/4. Functionally, catalyzes the conversion of GTP to 2,5-diamino-6-ribosylamino-4(3H)-pyrimidinone 5'-phosphate (DARP), formate and pyrophosphate. This Vibrio cholerae serotype O1 (strain ATCC 39315 / El Tor Inaba N16961) protein is GTP cyclohydrolase-2.